A 182-amino-acid chain; its full sequence is Keratin, type II cytoskeletal 60 kDa, component III (182 aa).

The region spanning 1-63 (ERGELALKDA…KLLEGEECRL (63 aa)) is the IF rod domain. The segment at 1 to 63 (ERGELALKDA…KLLEGEECRL (63 aa)) is coil 2. Residues 63–182 (LSGEGVGPVN…TSSSRKSFKS (120 aa)) form a tail region. The interval 157–182 (FGSGGGSSSSVKFVSTTSSSRKSFKS) is disordered. Residues 164 to 182 (SSSVKFVSTTSSSRKSFKS) are compositionally biased toward low complexity.

Belongs to the intermediate filament family. Heterotetramer of two type I and two type II keratins.

The polypeptide is Keratin, type II cytoskeletal 60 kDa, component III (Bos taurus (Bovine)).